A 302-amino-acid chain; its full sequence is Glycine--tRNA ligase alpha subunit (302 aa).

This sequence belongs to the class-II aminoacyl-tRNA synthetase family. Tetramer of two alpha and two beta subunits.

The protein localises to the cytoplasm. It catalyses the reaction tRNA(Gly) + glycine + ATP = glycyl-tRNA(Gly) + AMP + diphosphate. This is Glycine--tRNA ligase alpha subunit from Psychromonas ingrahamii (strain DSM 17664 / CCUG 51855 / 37).